Consider the following 257-residue polypeptide: Phosphate import ATP-binding protein PstB (257 aa).

The region spanning 11–252 (IQVRDLNFYY…PAKKQTEDYI (242 aa)) is the ABC transporter domain. 43-50 (GPSGCGKS) is an ATP binding site.

Belongs to the ABC transporter superfamily. Phosphate importer (TC 3.A.1.7) family. In terms of assembly, the complex is composed of two ATP-binding proteins (PstB), two transmembrane proteins (PstC and PstA) and a solute-binding protein (PstS).

The protein localises to the cell inner membrane. It carries out the reaction phosphate(out) + ATP + H2O = ADP + 2 phosphate(in) + H(+). Its function is as follows. Part of the ABC transporter complex PstSACB involved in phosphate import. Responsible for energy coupling to the transport system. This Salmonella paratyphi A (strain ATCC 9150 / SARB42) protein is Phosphate import ATP-binding protein PstB.